A 329-amino-acid chain; its full sequence is Phenylalanine--tRNA ligase alpha subunit (329 aa).

Mg(2+) is bound at residue Glu-254.

This sequence belongs to the class-II aminoacyl-tRNA synthetase family. Phe-tRNA synthetase alpha subunit type 1 subfamily. In terms of assembly, tetramer of two alpha and two beta subunits. The cofactor is Mg(2+).

It localises to the cytoplasm. It catalyses the reaction tRNA(Phe) + L-phenylalanine + ATP = L-phenylalanyl-tRNA(Phe) + AMP + diphosphate + H(+). The sequence is that of Phenylalanine--tRNA ligase alpha subunit (pheS) from Haemophilus influenzae (strain ATCC 51907 / DSM 11121 / KW20 / Rd).